Reading from the N-terminus, the 733-residue chain is Forkhead box protein K1 (733 aa).

At Ala-2 the chain carries N-acetylalanine. Positions 2 to 40 are interaction with SIN3A and SIN3B; that stretch reads AEVGEDSGARALLALRSAPCSPVLCAAAAAAAFPAAAPP. Residues 36 to 79 form a disordered region; sequence AAAPPPAPAQPQPPPGPPPPPPPPLPPGAIAGAGSSGGSSGVSG. Positions 37 to 62 are enriched in pro residues; it reads AAPPPAPAQPQPPPGPPPPPPPPLPP. The interval 95–420 is required for interaction with FOXO4 and MEF2C; the sequence is AASVRQSPGP…PLSSRSAPAS (326 aa). At Ser-101 the chain carries Phosphoserine. The FHA domain occupies 123–175; sequence VTIGRNSSQGSVDLSMGLSSFISRRHLQLSFQEPHFYLRCLGKNGVFVDGAFQ. Arg-161 and Arg-191 each carry omega-N-methylarginine. Residues Ser-213, Ser-223, Ser-239, and Ser-243 each carry the phosphoserine modification. Phosphothreonine is present on residues Thr-245 and Thr-247. Ser-253, Ser-257, Ser-295, and Ser-299 each carry phosphoserine. Disordered regions lie at residues 287–306 and 413–436; these read ASEQ…ESKP and SSRS…GLQT. Positions 305–400 form a DNA-binding region, fork-head; sequence KPPFSYAQLI…EQAFRKRRQR (96 aa). Ser-416 and Ser-420 each carry phosphoserine. At Thr-422 the chain carries Phosphothreonine. The residue at position 428 (Ser-428) is a Phosphoserine. Thr-436 is subject to Phosphothreonine. Phosphoserine is present on residues Ser-441, Ser-445, and Ser-459. Low complexity predominate over residues 676–697; it reads VAATATTTPATATTASASASST. Positions 676 to 733 are disordered; sequence VAATATTTPATATTASASASSTGEPEVKRSRVEEPSGAVTTPAGVIAAAGPQGPGTGE. Residues 700–709 show a composition bias toward basic and acidic residues; that stretch reads PEVKRSRVEE.

As to quaternary structure, interacts with SIN3A and SIN3B (via PAH2) to form a complex which represses transcription. Component of SIN3A-, but not SIN3B-, containing multiprotein complexes. Interacts with FOXO4 and MEF2C; both interactions inhibit FOXO4 and MEF2C transactivation activity. Interacts (when phosphorylated) with YWHAE/14-3-3-epsilon; promotes sequestration in the cytoplasm and leads to impaired ability to bind DNA. Interacts with FHL2. Interacts with SRF. Interacts with DVL2 and DVL3; the interaction induces DVL2 nuclear translocation. Interacts with BAP1 (when phosphorylated). Accessory component of the polycomb repressive deubiquitinase (PR-DUB) complex, at least composed of BAP1, one of ASXL1, ASXL2 or (probably) ASXL3 and one of MBD5 or MBD6. The PR-DUB core associates with a number of accessory proteins, including FOXK1, FOXK2, KDM1B, HCFC1 and OGT. In terms of processing, phosphorylation by GSK3 (GSK3A or GSK3B) promotes interaction with YWHAE/14-3-3-epsilon and retention in the cytoplasm. In response to mTORC1 signaling, phosphorylation by GSK3 is prevented, leading to translocation to the nucleus. In terms of tissue distribution, expressed both developing and adult tissues. In adults, significant expression is seen in tumors of the brain, colon and lymph node.

It localises to the nucleus. Its subcellular location is the cytoplasm. In terms of biological role, transcriptional regulator involved in different processes such as glucose metabolism, aerobic glycolysis, muscle cell differentiation and autophagy. Recognizes and binds the forkhead DNA sequence motif (5'-GTAAACA-3') and can both act as a transcription activator or repressor, depending on the context. Together with FOXK2, acts as a key regulator of metabolic reprogramming towards aerobic glycolysis, a process in which glucose is converted to lactate in the presence of oxygen. Acts by promoting expression of enzymes for glycolysis (such as hexokinase-2 (HK2), phosphofructokinase, pyruvate kinase (PKLR) and lactate dehydrogenase), while suppressing further oxidation of pyruvate in the mitochondria by up-regulating pyruvate dehydrogenase kinases PDK1 and PDK4. Probably plays a role in gluconeogenesis during overnight fasting, when lactate from white adipose tissue and muscle is the main substrate. Involved in mTORC1-mediated metabolic reprogramming: in response to mTORC1 signaling, translocates into the nucleus and regulates the expression of genes associated with glycolysis and downstream anabolic pathways, such as HIF1A, thereby regulating glucose metabolism. Together with FOXK2, acts as a negative regulator of autophagy in skeletal muscle: in response to starvation, enters the nucleus, binds the promoters of autophagy genes and represses their expression, preventing proteolysis of skeletal muscle proteins. Acts as a transcriptional regulator of the myogenic progenitor cell population in skeletal muscle. Binds to the upstream enhancer region (CCAC box) of myoglobin (MB) gene, regulating the myogenic progenitor cell population. Promotes muscle progenitor cell proliferation by repressing the transcriptional activity of FOXO4, thereby inhibiting myogenic differentiation. Involved in remodeling processes of adult muscles that occur in response to physiological stimuli. Required to correct temporal orchestration of molecular and cellular events necessary for muscle repair. Represses myogenic differentiation by inhibiting MEFC activity. Positively regulates Wnt/beta-catenin signaling by translocating DVL into the nucleus. Reduces virus replication, probably by binding the interferon stimulated response element (ISRE) to promote antiviral gene expression. Accessory component of the polycomb repressive deubiquitinase (PR-DUB) complex; recruits the PR-DUB complex to specific FOXK1-bound genes. The protein is Forkhead box protein K1 of Homo sapiens (Human).